The chain runs to 427 residues: Protein TIFY 6a (427 aa).

Basic and acidic residues predominate over residues 1–25 (MERDFLGAIWRKEEAAGKPEEHSDY). Disordered stretches follow at residues 1–32 (MERDFLGAIWRKEEAAGKPEEHSDYRGGGGGA) and 128–154 (YGVAAPHHFPSPSPSPRHPVPFGHANP). Over residues 136 to 146 (FPSPSPSPRHP) the composition is skewed to pro residues. The Tify domain occupies 196-231 (QNPKVTQMTIFYDGLVNVFDNIPVEKAQELMLLASR). The disordered stretch occupies residues 296–327 (SFSSSNDSAGPKSGGLPLAVTPLSQASPSQPI). Over residues 317-327 (PLSQASPSQPI) the composition is skewed to polar residues. The Jas motif lies at 343 to 367 (PQARKASLARFLEKRKERVSSVAPY). Residues 345 to 352 (ARKASLAR) carry the Nuclear localization signal motif. Residues 361–427 (VSSVAPYPSS…QEPPSTKLQI (67 aa)) are disordered. Polar residues-rich tracts occupy residues 369-402 (SSKSPLESSDTIGSPSTPSKSSCTDITPSTNNCE) and 411-427 (RNISFSSQEPPSTKLQI).

It belongs to the TIFY/JAZ family. Interacts with COI1A. Interacts with COI1A and COI1B in a coronatine-dependent manner. Coronatine is an analog of jasmonoyl isoleucine (JA-Ile). Post-translationally, ubiquitinated. Targeted for degradation by the SCF(COI1) E3 ubiquitin ligase-proteasome pathway during jasmonate signaling.

It is found in the nucleus. In terms of biological role, repressor of jasmonate responses. The sequence is that of Protein TIFY 6a from Oryza sativa subsp. japonica (Rice).